The chain runs to 225 residues: uncharacterized protein (225 aa).

The chain crosses the membrane as a helical span at residues 2-22 (TIFYLVFIAVIIIIILYVLYL). N73 carries an N-linked (GlcNAc...) asparagine; by host glycan. Positions 114-146 (DYEDNYFNSNWNLKQLKNQLENLLREKNYKMVL) form a coiled coil. N222 is a glycosylation site (N-linked (GlcNAc...) asparagine; by host).

It is found in the membrane. This is an uncharacterized protein from Acanthamoeba polyphaga (Amoeba).